A 331-amino-acid polypeptide reads, in one-letter code: 5'-AMP-activated protein kinase subunit gamma-1 (331 aa).

Residues 1–12 (METVISSDSSPA) show a composition bias toward polar residues. Residues 1 to 26 (METVISSDSSPAVENEHPQETPESNN) are disordered. 3 consecutive CBS domains span residues 43–103 (PTSS…KSAL), 125–187 (SFKP…PKPE), and 198–260 (IGTY…NLDV). ADP contacts are provided by residues R70, 85-90 (MLTITD), V130, 151-152 (HR), and K170. AMP-binding positions include R70, 85-90 (MLTITD), V130, H151, 151-152 (HR), K170, T200, A205, 226-227 (SA), and 242-245 (SKFD). ATP contacts are provided by residues R70, 85 to 90 (MLTITD), V130, 151 to 152 (HR), R152, and K170. The short motif at 138–159 (LFDAVSSLIRNKIHRLPVIDPE) is the AMPK pseudosubstrate element. Residue 242 to 245 (SKFD) participates in ADP binding. 242-245 (SKFD) contributes to the ATP binding site. S261 is modified (phosphoserine; by ULK1). A Phosphothreonine; by ULK1 modification is found at T263. R269 provides a ligand contact to ADP. Position 269 (R269) interacts with AMP. Position 269 (R269) interacts with ATP. Phosphoserine; by ULK1 is present on S270. A CBS 4 domain is found at 272–329 (YFEGVLKCYLHETLETIINRLVEAEVHRLVVVDENDVVKGIVSLSDILQALVLTGGEK). Residues L277 and 298–299 (HR) each bind ADP. AMP is bound by residues L277, H298, 298–299 (HR), and 314–317 (SLSD). Residues L277 and 298 to 299 (HR) contribute to the ATP site.

It belongs to the 5'-AMP-activated protein kinase gamma subunit family. AMPK is a heterotrimer of an alpha catalytic subunit (PRKAA1 or PRKAA2), a beta (PRKAB1 or PRKAB2) and a gamma non-catalytic subunits (PRKAG1, PRKAG2 or PRKAG3). Interacts with FNIP1 and FNIP2. Phosphorylated by ULK1 and ULK2; leading to negatively regulate AMPK activity and suggesting the existence of a regulatory feedback loop between ULK1, ULK2 and AMPK. Post-translationally, glycosylated; O-GlcNAcylated by OGT, promoting the AMP-activated protein kinase (AMPK) activity.

Its function is as follows. AMP/ATP-binding subunit of AMP-activated protein kinase (AMPK), an energy sensor protein kinase that plays a key role in regulating cellular energy metabolism. In response to reduction of intracellular ATP levels, AMPK activates energy-producing pathways and inhibits energy-consuming processes: inhibits protein, carbohydrate and lipid biosynthesis, as well as cell growth and proliferation. AMPK acts via direct phosphorylation of metabolic enzymes, and by longer-term effects via phosphorylation of transcription regulators. Also acts as a regulator of cellular polarity by remodeling the actin cytoskeleton; probably by indirectly activating myosin. Gamma non-catalytic subunit mediates binding to AMP, ADP and ATP, leading to activate or inhibit AMPK: AMP-binding results in allosteric activation of alpha catalytic subunit (PRKAA1 or PRKAA2) both by inducing phosphorylation and preventing dephosphorylation of catalytic subunits. ADP also stimulates phosphorylation, without stimulating already phosphorylated catalytic subunit. ATP promotes dephosphorylation of catalytic subunit, rendering the AMPK enzyme inactive. The protein is 5'-AMP-activated protein kinase subunit gamma-1 (PRKAG1) of Homo sapiens (Human).